A 445-amino-acid chain; its full sequence is Protein cereblon (445 aa).

A disordered region spans residues 1–48; it reads MAGEGDQQDAAHNMGNHLPLLPADSEDEDDEIEMEVEDQDSKEARKPN. Positions 24 to 38 are enriched in acidic residues; it reads DSEDEDDEIEMEVED. Ser-25 carries the post-translational modification Phosphoserine. The region spanning 84–322 is the Lon N-terminal domain; sequence IPVLPEVLMI…CELDIMNKCT (239 aa). In terms of domain architecture, CULT spans 321–429; that stretch reads CTSLCCKQCQ…LTRSALLPTI (109 aa). Zn(2+) contacts are provided by Cys-326 and Cys-329. Residues His-381, Trp-383, and Trp-389 each contribute to the (S)-thalidomide site. Residues Cys-394 and Cys-397 each coordinate Zn(2+).

Belongs to the CRBN family. Component of a DCX (DDB1-CUL4-X-box) protein ligase complex, at least composed of CRBN, CUL4A, DDB1 and RBX1. Interacts directly with DDB1. Interacts with KCNT1. Interacts with ILF2. Interacts with TRAF6 and ECSIT. Post-translationally, ubiquitinated, ubiquitination is mediated by its own DCX protein ligase complex. Highly expressed in brain.

It localises to the cytoplasm. It is found in the nucleus. Its subcellular location is the membrane. Its pathway is protein modification; protein ubiquitination. Substrate recognition component of a DCX (DDB1-CUL4-X-box) E3 protein ligase complex that mediates the ubiquitination and subsequent proteasomal degradation of target proteins, such as MEIS2, ILF2 or GLUL. Normal degradation of key regulatory proteins is required for normal limb outgrowth and expression of the fibroblast growth factor FGF8. Maintains presynaptic glutamate release and consequently, cognitive functions such as memory and learning, by negatively regulating large-conductance calcium-activated potassium (BK) channels in excitatory neurons. Likely to function by regulating the assembly and neuronal surface expression of BK channels via its interaction with KCNT1. May also be involved in regulating anxiety-like behaviors via a BK channel-independent mechanism. Plays a negative role in TLR4 signaling by interacting with TRAF6 and ECSIT, leading to inhibition of ECSIT ubiquitination, an important step of the signaling. The protein is Protein cereblon (Crbn) of Mus musculus (Mouse).